The sequence spans 135 residues: MIYGNGIDIQEIRKIQKAQEKRESFAKRILTVNELAIFEKYKGNRKYEFLAGRFSAKEAFSKAYGTGIGKKVGFQDIEILNDNQTGRPEIVKFPGDNKLQAKISISHSGEYVVTEVILEKLTWQTKMKKFLIKQK.

Mg(2+)-binding residues include Asp-8 and Glu-58.

Belongs to the P-Pant transferase superfamily. AcpS family. It depends on Mg(2+) as a cofactor.

The protein resides in the cytoplasm. It carries out the reaction apo-[ACP] + CoA = holo-[ACP] + adenosine 3',5'-bisphosphate + H(+). Its function is as follows. Transfers the 4'-phosphopantetheine moiety from coenzyme A to a Ser of acyl-carrier-protein. The protein is Holo-[acyl-carrier-protein] synthase of Ligilactobacillus salivarius (strain UCC118) (Lactobacillus salivarius).